A 252-amino-acid polypeptide reads, in one-letter code: uncharacterized protein (252 aa).

A signal peptide spans 1–22 (MIHSKRLRLWLYLVLLAVFISA). Residue C23 is the site of N-palmitoyl cysteine attachment. The S-diacylglycerol cysteine moiety is linked to residue C23.

This sequence belongs to the staphylococcal tandem lipoprotein family.

It is found in the cell membrane. This is an uncharacterized protein from Staphylococcus aureus (strain MW2).